Here is an 842-residue protein sequence, read N- to C-terminus: Xyloglucanase Xgh74A (842 aa).

A signal peptide spans 1 to 32 (MVKKFTSKIKAAVFAAVVAATAIFGPAISSQA). D70 functions as the Nucleophile in the catalytic mechanism. BNR repeat units lie at residues 134 to 144 (RSTDRGETWEK), 185 to 196 (WRSTDYGVTWSK), 252 to 262 (YRSTDGGVTWK), and 358 to 368 (FRSTDGGATWK). The active-site Proton donor is the D480. BNR repeat units lie at residues 533–541 (FSYDGGRNW), 577–586 (VTTDNGNSWK), 616–626 (YISTDGGLTFT), 660–671 (WRSTDGGYTFEK), and 708–718 (FRSDDAGKTWV). One can recognise a Dockerin domain in the interval 771–841 (DKGLVGDLNG…LLQAIPELPK (71 aa)).

This sequence belongs to the glycosyl hydrolase 74 family.

Its function is as follows. Hydrolyzes the glucosidic bonds of unbranched Glc residues in tamarind seed xyloglucan, producing XXXG, XLXG, XXLG and XLLG. Has low activity on carboxymethylcellulose, lichenan,hydroxyethylcellulose and glucuronoxylan, and no activity on xylan, polygalaturonic acid, wheat arabinoxylan, rhamnogalacturan, curdlan, laminarin, galactomannan, galactan, arabinan and pachyman or amorphous cellulose. This chain is Xyloglucanase Xgh74A, found in Acetivibrio thermocellus (strain ATCC 27405 / DSM 1237 / JCM 9322 / NBRC 103400 / NCIMB 10682 / NRRL B-4536 / VPI 7372) (Clostridium thermocellum).